We begin with the raw amino-acid sequence, 338 residues long: Ketol-acid reductoisomerase (NADP(+)) (338 aa).

One can recognise a KARI N-terminal Rossmann domain in the interval 1 to 181 (MNVFYDKDAD…GGGRAGIIET (181 aa)). NADP(+) contacts are provided by residues 24 to 27 (YGSQ), arginine 47, and serine 52. Residue histidine 107 is part of the active site. Glycine 133 is an NADP(+) binding site. The 146-residue stretch at 182 to 327 (NFREETETDL…AKLRAMMPWI (146 aa)) folds into the KARI C-terminal knotted domain. Mg(2+) contacts are provided by aspartate 190, glutamate 194, glutamate 226, and glutamate 230. A substrate-binding site is contributed by serine 251.

Belongs to the ketol-acid reductoisomerase family. Mg(2+) serves as cofactor.

It carries out the reaction (2R)-2,3-dihydroxy-3-methylbutanoate + NADP(+) = (2S)-2-acetolactate + NADPH + H(+). The enzyme catalyses (2R,3R)-2,3-dihydroxy-3-methylpentanoate + NADP(+) = (S)-2-ethyl-2-hydroxy-3-oxobutanoate + NADPH + H(+). It participates in amino-acid biosynthesis; L-isoleucine biosynthesis; L-isoleucine from 2-oxobutanoate: step 2/4. The protein operates within amino-acid biosynthesis; L-valine biosynthesis; L-valine from pyruvate: step 2/4. Involved in the biosynthesis of branched-chain amino acids (BCAA). Catalyzes an alkyl-migration followed by a ketol-acid reduction of (S)-2-acetolactate (S2AL) to yield (R)-2,3-dihydroxy-isovalerate. In the isomerase reaction, S2AL is rearranged via a Mg-dependent methyl migration to produce 3-hydroxy-3-methyl-2-ketobutyrate (HMKB). In the reductase reaction, this 2-ketoacid undergoes a metal-dependent reduction by NADPH to yield (R)-2,3-dihydroxy-isovalerate. This Burkholderia ambifaria (strain MC40-6) protein is Ketol-acid reductoisomerase (NADP(+)).